The primary structure comprises 357 residues: MDLPINLTSFSLSTPSTLEPNRSLDTEALRTSQSFLSAFRVLVLTLLGFLAAATFTWNLLVLATILRVRTFHRVPHNLVASMAISDVLVAVLVMPLSLVHELSGRRWQLGRRLCQLWIACDVLCCTASIWNVTAIALDRYWSITRHLEYTLRARKRVSNVMILLTWALSAVISLAPLLFGWGETYSELSEECQVSREPSYTVFSTVGAFYLPLCVVLFVYWKIYKAAKFRMGSRKTNSVSPIPEAVEVKDASQHPQMVFTVRHATVTFQTEGDTWREQKEQRAALMVGILIGVFVLCWFPFFVTELISPLCSWDIPALWKSIFLWLGYSNSFFNPLIYTAFNRSYSSAFKVFFSKQQ.

The Extracellular portion of the chain corresponds to 1 to 36; the sequence is MDLPINLTSFSLSTPSTLEPNRSLDTEALRTSQSFL. 2 N-linked (GlcNAc...) asparagine glycosylation sites follow: Asn-6 and Asn-21. The helical transmembrane segment at 37 to 63 threads the bilayer; the sequence is SAFRVLVLTLLGFLAAATFTWNLLVLA. At 64–76 the chain is on the cytoplasmic side; the sequence is TILRVRTFHRVPH. A helical membrane pass occupies residues 77–103; the sequence is NLVASMAISDVLVAVLVMPLSLVHELS. At 104–114 the chain is on the extracellular side; it reads GRRWQLGRRLC. A disulfide bridge links Cys-114 with Cys-192. The chain crosses the membrane as a helical span at residues 115–137; sequence QLWIACDVLCCTASIWNVTAIAL. Serotonin is bound at residue Asp-121. The Cytoplasmic portion of the chain corresponds to 138 to 155; the sequence is DRYWSITRHLEYTLRARK. A helical transmembrane segment spans residues 156-176; sequence RVSNVMILLTWALSAVISLAP. Residues 177–198 lie on the Extracellular side of the membrane; that stretch reads LLFGWGETYSELSEECQVSREP. The helical transmembrane segment at 199–220 threads the bilayer; sequence SYTVFSTVGAFYLPLCVVLFVY. At 221–287 the chain is on the cytoplasmic side; the sequence is WKIYKAAKFR…QKEQRAALMV (67 aa). A helical transmembrane segment spans residues 288–312; the sequence is GILIGVFVLCWFPFFVTELISPLCS. The Extracellular segment spans residues 313-314; sequence WD. A helical membrane pass occupies residues 315-339; that stretch reads IPALWKSIFLWLGYSNSFFNPLIYT. The Cytoplasmic portion of the chain corresponds to 340–357; it reads AFNRSYSSAFKVFFSKQQ.

It belongs to the G-protein coupled receptor 1 family. Central nervous system.

It localises to the cell membrane. Functionally, G-protein coupled receptor for 5-hydroxytryptamine (serotonin), a biogenic hormone that functions as a neurotransmitter, a hormone and a mitogen. Also functions as a receptor for ergot alkaloid derivatives and other psychoactive substances. Ligand binding causes a conformation change that triggers signaling via guanine nucleotide-binding proteins (G proteins) and modulates the activity of downstream effectors. Htr5a is coupled to G(i)/G(o) G alpha proteins and mediates inhibitory neurotransmission: signaling inhibits adenylate cyclase activity and activates a phosphatidylinositol-calcium second messenger system that regulates the release of Ca(2+) ions from intracellular stores. The polypeptide is 5-hydroxytryptamine receptor 5A (Rattus norvegicus (Rat)).